Consider the following 152-residue polypeptide: Ribonuclease pancreatic (152 aa).

An N-terminal signal peptide occupies residues 1-24; the sequence is MALDKSVILLPLLVLVLLVLGCLG. The substrate site is built by Lys31 and Arg34. His36 acts as the Proton acceptor in catalysis. Asn46 carries an N-linked (GlcNAc...) asparagine glycan. Intrachain disulfides connect Cys50-Cys108, Cys64-Cys119, Cys82-Cys134, and Cys89-Cys96. Residues 65–69, Lys90, and Arg109 each bind substrate; that span reads KPVNT. Asn112 is a glycosylation site (N-linked (GlcNAc...) asparagine). His143 acts as the Proton donor in catalysis.

The protein belongs to the pancreatic ribonuclease family. Monomer. Interacts with and forms tight 1:1 complexes with RNH1. Dimerization of two such complexes may occur. Interaction with RNH1 inhibits this protein.

It is found in the secreted. It catalyses the reaction an [RNA] containing cytidine + H2O = an [RNA]-3'-cytidine-3'-phosphate + a 5'-hydroxy-ribonucleotide-3'-[RNA].. It carries out the reaction an [RNA] containing uridine + H2O = an [RNA]-3'-uridine-3'-phosphate + a 5'-hydroxy-ribonucleotide-3'-[RNA].. Endonuclease that catalyzes the cleavage of RNA on the 3' side of pyrimidine nucleotides. Acts on single-stranded and double-stranded RNA. In Papio hamadryas (Hamadryas baboon), this protein is Ribonuclease pancreatic (RNASE1).